The following is a 985-amino-acid chain: Lateral signaling target protein 2 homolog (985 aa).

Disordered stretches follow at residues 310–453 (PLGS…ETDE), 498–520 (EYGA…PSTS), 533–640 (LRLP…SSLS), and 747–892 (DNVF…TTTA). Low complexity-rich tracts occupy residues 327–348 (HPTT…TNTH), 384–393 (SLSPNSTPTA), and 401–422 (PSHS…PADW). Residues 423 to 453 (SDGDDEDEEDDDDDIEVEEEELDSTDDETDE) show a composition bias toward acidic residues. Phosphoserine occurs at positions 537 and 538. Basic residues-rich tracts occupy residues 563-589 (VYRH…HHQH) and 596-607 (HPHRTTRSGRKR). Low complexity-rich tracts occupy residues 629–640 (ASGDTSAASSLS) and 761–770 (NGNQANASAQ). Residues 776 to 785 (GSIQRNNTVD) show a composition bias toward polar residues. Ser-808 bears the Phosphoserine mark. Low complexity predominate over residues 812-866 (QESASTSTSSSQLHQEQQQLQIQVQRQRNNSVGSNTPSSASSTSSSSEQNSPVSA). A compositionally biased stretch (polar residues) spans 875–885 (QSNNETQMPSS). The FYVE-type zinc-finger motif lies at 904 to 964 (DGKAPRCMSC…VCRECYVREV (61 aa)). Positions 910, 913, 926, 929, 934, 937, 956, and 959 each coordinate Zn(2+).

Belongs to the lst-2 family.

Negative regulator of epidermal growth factor receptor (EGFR) signaling. The protein is Lateral signaling target protein 2 homolog of Drosophila ananassae (Fruit fly).